The sequence spans 247 residues: Aliphatic sulfonates import ATP-binding protein SsuB 3 (247 aa).

Residues 28-242 (VSVRGLQRRY…ALRSILLEEL (215 aa)) enclose the ABC transporter domain. 60–67 (GESGCGKT) lines the ATP pocket.

It belongs to the ABC transporter superfamily. Aliphatic sulfonates importer (TC 3.A.1.17.2) family. The complex is composed of two ATP-binding proteins (SsuB), two transmembrane proteins (SsuC) and a solute-binding protein (SsuA).

The protein localises to the cell inner membrane. It carries out the reaction ATP + H2O + aliphatic sulfonate-[sulfonate-binding protein]Side 1 = ADP + phosphate + aliphatic sulfonateSide 2 + [sulfonate-binding protein]Side 1.. Part of the ABC transporter complex SsuABC involved in aliphatic sulfonates import. Responsible for energy coupling to the transport system. The protein is Aliphatic sulfonates import ATP-binding protein SsuB 3 of Paraburkholderia xenovorans (strain LB400).